We begin with the raw amino-acid sequence, 433 residues long: 4-hydroxy-3-methylbut-2-en-1-yl diphosphate synthase (flavodoxin) (433 aa).

Polar residues predominate over residues Met1–Pro10. Positions Met1–Arg24 are disordered. Residues Cys320, Cys323, Cys366, and Glu373 each coordinate [4Fe-4S] cluster.

This sequence belongs to the IspG family. It depends on [4Fe-4S] cluster as a cofactor.

It carries out the reaction (2E)-4-hydroxy-3-methylbut-2-enyl diphosphate + oxidized [flavodoxin] + H2O + 2 H(+) = 2-C-methyl-D-erythritol 2,4-cyclic diphosphate + reduced [flavodoxin]. Its pathway is isoprenoid biosynthesis; isopentenyl diphosphate biosynthesis via DXP pathway; isopentenyl diphosphate from 1-deoxy-D-xylulose 5-phosphate: step 5/6. Its function is as follows. Converts 2C-methyl-D-erythritol 2,4-cyclodiphosphate (ME-2,4cPP) into 1-hydroxy-2-methyl-2-(E)-butenyl 4-diphosphate. This chain is 4-hydroxy-3-methylbut-2-en-1-yl diphosphate synthase (flavodoxin), found in Bordetella bronchiseptica (strain ATCC BAA-588 / NCTC 13252 / RB50) (Alcaligenes bronchisepticus).